Consider the following 412-residue polypeptide: Putative gustatory receptor 58c (412 aa).

The next 2 helical transmembrane spans lie at 39-59 (VVYC…ALFV) and 72-92 (MFGV…LFLM). Asparagine 158 is a glycosylation site (N-linked (GlcNAc...) asparagine). Residues 173 to 193 (IVYALIMILLMSYVDMTVYMV) traverse the membrane as a helical segment. Residue asparagine 203 is glycosylated (N-linked (GlcNAc...) asparagine). The next 3 membrane-spanning stretches (helical) occupy residues 224–241 (IPRE…RKLW), 262–282 (VLFN…RLWI), and 296–316 (ILYA…FSIF). N-linked (GlcNAc...) asparagine glycans are attached at residues asparagine 337, asparagine 386, and asparagine 391.

It belongs to the insect chemoreceptor superfamily. Gustatory receptor (GR) family. Gr10a subfamily.

The protein localises to the cell membrane. Functionally, probable gustatory receptor which mediates acceptance or avoidance behavior, depending on its substrates. In Drosophila melanogaster (Fruit fly), this protein is Putative gustatory receptor 58c (Gr58c).